A 208-amino-acid chain; its full sequence is Small ribosomal subunit protein eS1 (208 aa).

The protein belongs to the eukaryotic ribosomal protein eS1 family.

The protein is Small ribosomal subunit protein eS1 of Saccharolobus islandicus (strain Y.N.15.51 / Yellowstone #2) (Sulfolobus islandicus).